The following is a 185-amino-acid chain: Virulence membrane protein PagC (185 aa).

Residues 1-23 form the signal peptide; the sequence is MKNIILSTLVITTSVLVVNVAQA.

It belongs to the outer membrane OOP (TC 1.B.6) superfamily. Ail family.

The protein resides in the cell outer membrane. Essential for full virulence and survival within macrophages. The sequence is that of Virulence membrane protein PagC (pagC) from Salmonella typhimurium (strain LT2 / SGSC1412 / ATCC 700720).